The chain runs to 445 residues: Rab GDP dissociation inhibitor beta (445 aa).

Position 1 is an N-acetylmethionine (methionine 1). At lysine 57 the chain carries N6-succinyllysine. Lysine 112 is modified (N6-acetyllysine). The residue at position 130 (serine 130) is a Phosphoserine. An N6-acetyllysine modification is found at lysine 269. Serine 382 is modified (phosphoserine).

It belongs to the Rab GDI family. Interacts with RHOH. Interacts with the GDP-bound inactive forms of RAB3A, RAB3B, RAB3C, RAB5A, RAB5B, RAB5C, RAB8A, RAB8B, RAB10, RAB12, RAB35, and RAB43; binds RAB3D to a lesser extent. Interacts with DZIP1; this interaction negatively regulates the interaction of GDI2 with GDP-bound RAB8A. Ubiquitously expressed.

It is found in the cytoplasm. The protein localises to the membrane. It localises to the golgi apparatus. Its subcellular location is the trans-Golgi network. In terms of biological role, GDP-dissociation inhibitor preventing the GDP to GTP exchange of most Rab proteins. By keeping these small GTPases in their inactive GDP-bound form regulates intracellular membrane trafficking. Negatively regulates protein transport to the cilium and ciliogenesis through the inhibition of RAB8A. The protein is Rab GDP dissociation inhibitor beta (GDI2) of Bos taurus (Bovine).